A 140-amino-acid polypeptide reads, in one-letter code: CDGSH iron-sulfur domain-containing protein 2 homolog (140 aa).

The Lumenal segment spans residues Met1–Asp35. Residues Ala36 to Gln59 form a helical membrane-spanning segment. Over Pro60–Asn140 the chain is Cytoplasmic. [2Fe-2S] cluster contacts are provided by Cys104, Cys106, Cys115, and His119.

Belongs to the CISD protein family. CISD2 subfamily. [2Fe-2S] cluster is required as a cofactor.

The protein localises to the endoplasmic reticulum membrane. The chain is CDGSH iron-sulfur domain-containing protein 2 homolog from Trichoplax adhaerens (Trichoplax reptans).